We begin with the raw amino-acid sequence, 329 residues long: Holliday junction branch migration complex subunit RuvB (329 aa).

A disordered region spans residues 1 to 20 (MSRILEGDPVEGEKSWENEL). Residues 1 to 181 (MSRILEGDPV…FGIVERLQFY (181 aa)) are large ATPase domain (RuvB-L). The span at 11 to 20 (EGEKSWENEL) shows a compositional bias: basic and acidic residues. ATP is bound by residues L20, R21, G62, K65, T66, T67, 128–130 (EDY), R171, Y181, and R218. Mg(2+) is bound at residue T66. The small ATPAse domain (RuvB-S) stretch occupies residues 182-252 (DKDALRQILM…IAVYALNQLG (71 aa)). The tract at residues 255–329 (QYGLDLMDRR…FAKSSVLADK (75 aa)) is head domain (RuvB-H). The DNA site is built by R291, K310, and R315.

The protein belongs to the RuvB family. As to quaternary structure, homohexamer. Forms an RuvA(8)-RuvB(12)-Holliday junction (HJ) complex. HJ DNA is sandwiched between 2 RuvA tetramers; dsDNA enters through RuvA and exits via RuvB. An RuvB hexamer assembles on each DNA strand where it exits the tetramer. Each RuvB hexamer is contacted by two RuvA subunits (via domain III) on 2 adjacent RuvB subunits; this complex drives branch migration. In the full resolvosome a probable DNA-RuvA(4)-RuvB(12)-RuvC(2) complex forms which resolves the HJ.

It is found in the cytoplasm. It catalyses the reaction ATP + H2O = ADP + phosphate + H(+). The RuvA-RuvB-RuvC complex processes Holliday junction (HJ) DNA during genetic recombination and DNA repair, while the RuvA-RuvB complex plays an important role in the rescue of blocked DNA replication forks via replication fork reversal (RFR). RuvA specifically binds to HJ cruciform DNA, conferring on it an open structure. The RuvB hexamer acts as an ATP-dependent pump, pulling dsDNA into and through the RuvAB complex. RuvB forms 2 homohexamers on either side of HJ DNA bound by 1 or 2 RuvA tetramers; 4 subunits per hexamer contact DNA at a time. Coordinated motions by a converter formed by DNA-disengaged RuvB subunits stimulates ATP hydrolysis and nucleotide exchange. Immobilization of the converter enables RuvB to convert the ATP-contained energy into a lever motion, pulling 2 nucleotides of DNA out of the RuvA tetramer per ATP hydrolyzed, thus driving DNA branch migration. The RuvB motors rotate together with the DNA substrate, which together with the progressing nucleotide cycle form the mechanistic basis for DNA recombination by continuous HJ branch migration. Branch migration allows RuvC to scan DNA until it finds its consensus sequence, where it cleaves and resolves cruciform DNA. In Bdellovibrio bacteriovorus (strain ATCC 15356 / DSM 50701 / NCIMB 9529 / HD100), this protein is Holliday junction branch migration complex subunit RuvB.